Consider the following 216-residue polypeptide: RNA pyrophosphohydrolase (216 aa).

A Nudix hydrolase domain is found at 6–149 (GFRPNVGIIL…KRDVYQLALT (144 aa)). A Nudix box motif is present at residues 38–59 (GGIKYGETPMQAMYRELHEETG). A disordered region spans residues 159 to 180 (AQRTDKSRGPRAPRYPRVSNGH).

It belongs to the Nudix hydrolase family. RppH subfamily. The cofactor is a divalent metal cation.

Accelerates the degradation of transcripts by removing pyrophosphate from the 5'-end of triphosphorylated RNA, leading to a more labile monophosphorylated state that can stimulate subsequent ribonuclease cleavage. This chain is RNA pyrophosphohydrolase, found in Burkholderia thailandensis (strain ATCC 700388 / DSM 13276 / CCUG 48851 / CIP 106301 / E264).